The chain runs to 430 residues: Adenylosuccinate synthetase (430 aa).

Residues 12–18 (GDEGKGK) and 40–42 (GHT) contribute to the GTP site. Asp-13 functions as the Proton acceptor in the catalytic mechanism. Residues Asp-13 and Gly-40 each contribute to the Mg(2+) site. IMP-binding positions include 13–16 (DEGK), 38–41 (NAGH), Thr-128, Arg-142, Gln-223, Thr-238, and Arg-302. Residue His-41 is the Proton donor of the active site. Residue 298 to 304 (TTTGRPR) participates in substrate binding. GTP contacts are provided by residues Arg-304, 330 to 332 (LLD), and 412 to 414 (SVG).

Belongs to the adenylosuccinate synthetase family. Homodimer. Mg(2+) is required as a cofactor.

It is found in the cytoplasm. It carries out the reaction IMP + L-aspartate + GTP = N(6)-(1,2-dicarboxyethyl)-AMP + GDP + phosphate + 2 H(+). Its pathway is purine metabolism; AMP biosynthesis via de novo pathway; AMP from IMP: step 1/2. In terms of biological role, plays an important role in the de novo pathway of purine nucleotide biosynthesis. Catalyzes the first committed step in the biosynthesis of AMP from IMP. This Listeria monocytogenes serotype 4b (strain CLIP80459) protein is Adenylosuccinate synthetase.